A 335-amino-acid polypeptide reads, in one-letter code: Nucleoid-associated protein YejK (335 aa).

Belongs to the YejK family.

The protein resides in the cytoplasm. The protein localises to the nucleoid. This is Nucleoid-associated protein YejK from Shigella sonnei (strain Ss046).